A 673-amino-acid polypeptide reads, in one-letter code: G-protein-signaling modulator 1 (673 aa).

A mediates association with membranes region spans residues Met-1–Arg-507. TPR repeat units lie at residues Cys-28–Asp-61, Ser-66–Ile-99, Ala-106–Gln-139, Ala-146–Val-178, Glu-180–Leu-199, Gly-206–Phe-239, Arg-246–Ile-279, Ala-286–Leu-319, and Gly-326–Ile-359. The interval Asp-361 to Ile-485 is interaction with STK11/LKB1. Ser-410 is modified (phosphoserine). At Arg-418 the chain carries Omega-N-methylarginine. Over residues Pro-420–Ser-439 the composition is skewed to basic and acidic residues. Positions Pro-420–Arg-477 are disordered. Residues Ser-442, Ser-467, Ser-469, Ser-490, and Ser-491 each carry the phosphoserine modification. Residues Lys-451–Ser-467 are compositionally biased toward basic and acidic residues. Positions Glu-493 to Leu-515 constitute a GoLoco 1 domain. Residues Asp-510–Pro-544 form a disordered region. Low complexity predominate over residues Glu-516–Thr-530. 2 positions are modified to phosphoserine: Ser-543 and Ser-567. 3 GoLoco domains span residues Thr-546–Val-568, Gly-594–Pro-616, and Asp-628–Leu-650. Disordered stretches follow at residues Ile-609–Asp-628 and Glu-645–Ser-673. Ser-653 is subject to Phosphoserine.

Belongs to the GPSM family. As to quaternary structure, interacts with INSC/inscuteable and FRMPD1. Interacts with GNAI1, GNAI2 and GNAI3 preferentially in their GDP-bound state. May also interact with GNAO1. Interacts with STK11/LKB1 and MACF1. Post-translationally, phosphorylation regulates interaction with G(i/o) alpha. Isoform 4 is specifically expressed in brain by neurons and also detected in testis, liver, kidney, heart and pancreas (at protein level). Highly expressed in cerebellum and subventricular zone-olfactory bulb system. Isoform 2 and isoform 3 are specifically expressed in heart and are also detected in brain.

Its subcellular location is the endoplasmic reticulum membrane. It is found in the golgi apparatus membrane. It localises to the cell membrane. The protein resides in the cytoplasm. The protein localises to the cytosol. Guanine nucleotide dissociation inhibitor (GDI) which functions as a receptor-independent activator of heterotrimeric G-protein signaling. Keeps G(i/o) alpha subunit in its GDP-bound form thus uncoupling heterotrimeric G-proteins signaling from G protein-coupled receptors. Controls spindle orientation and asymmetric cell fate of cerebral cortical progenitors. May also be involved in macroautophagy in intestinal cells. May play a role in drug addiction. The chain is G-protein-signaling modulator 1 (Gpsm1) from Rattus norvegicus (Rat).